We begin with the raw amino-acid sequence, 615 residues long: Probable methylmalonyl-CoA mutase small subunit (615 aa).

Belongs to the methylmalonyl-CoA mutase family. In terms of assembly, heterodimer of an alpha and a beta chain. Adenosylcob(III)alamin serves as cofactor.

The enzyme catalyses (R)-methylmalonyl-CoA = succinyl-CoA. It functions in the pathway metabolic intermediate metabolism; propanoyl-CoA degradation; succinyl-CoA from propanoyl-CoA: step 3/3. Functionally, catalyzes the isomerization of succinyl-CoA to methylmalonyl-CoA during synthesis of propionate from tricarboxylic acid-cycle intermediates. This is Probable methylmalonyl-CoA mutase small subunit (mutA) from Mycobacterium bovis (strain ATCC BAA-935 / AF2122/97).